A 688-amino-acid polypeptide reads, in one-letter code: Mitochondrial potassium channel ATP-binding subunit (688 aa).

Residues 1–31 (MLFHFLQAGLRQCRPPARLVGLETGLSGARG) constitute a mitochondrion transit peptide. The next 4 helical transmembrane spans lie at 115–135 (PQLI…LLNI), 168–188 (LKLL…IVLL), 268–288 (GLLL…GSFL), and 342–362 (VLGV…NCIV). In terms of domain architecture, ABC transmembrane type-1 spans 121 to 409 (LTAVLLAFGA…MSVLFGQVVR (289 aa)). Positions 442–679 (IHFKDVSFSY…GGLYADLIRR (238 aa)) constitute an ABC transporter domain. 477-484 (GQSGGGKS) is an ATP binding site.

The protein belongs to the ABC transporter superfamily. ABCB family. Multidrug resistance exporter (TC 3.A.1.201) subfamily. Component of the mitochondrial potassium channel (mitoK(ATP)).

The protein resides in the mitochondrion inner membrane. Its function is as follows. ATP-binding subunit of the mitochondrial ATP-gated potassium channel (mitoK(ATP)). Together with pore-forming subunit CCDC51/MITOK of the mitoK(ATP) channel, mediates ATP-dependent potassium currents across the mitochondrial inner membrane. An increase in ATP intracellular levels closes the channel, inhibiting K(+) transport, whereas a decrease in ATP levels enhances K(+) uptake in the mitochondrial matrix. Plays a role in mitochondrial iron transport. Required for maintenance of normal cardiac function, possibly by influencing mitochondrial iron export and regulating the maturation of cytosolic iron sulfur cluster-containing enzymes. The protein is Mitochondrial potassium channel ATP-binding subunit of Xenopus tropicalis (Western clawed frog).